Here is a 176-residue protein sequence, read N- to C-terminus: Membrane glycoprotein UL144 (176 aa).

The N-terminal stretch at 1-20 (MKPLVMLICFGVILLQLGVT) is a signal peptide. A TNFR-Cys repeat occupies 58–95 (PCPNGTYVSGLYNCTDCTQCNVTQVMIRNCTSTNNTVC). Disulfide bonds link Cys59–Cys71, Cys74–Cys87, and Cys77–Cys95. Residues 134-154 (LAWLSLFIFLVGIILLILYLI) form a helical membrane-spanning segment.

As to quaternary structure, interacts with host TRIM23; this interaction causes auto-ubiquitination of TRAF6, leading to NF-kappaB activation.

The protein resides in the membrane. Activates NF-kappa-B in a tumor necrosis factor receptor (TNFR)-associated factor 6 (TRAF6)-dependent manner, causing the up-regulation of the chemokine CCL22. The protein is Membrane glycoprotein UL144 (UL144) of Human cytomegalovirus (strain Merlin) (HHV-5).